The following is a 241-amino-acid chain: Large ribosomal subunit protein uL3 (241 aa).

At glutamine 157 the chain carries N5-methylglutamine.

Belongs to the universal ribosomal protein uL3 family. In terms of assembly, part of the 50S ribosomal subunit. Forms a cluster with proteins L14 and L19. In terms of processing, methylated by PrmB.

One of the primary rRNA binding proteins, it binds directly near the 3'-end of the 23S rRNA, where it nucleates assembly of the 50S subunit. This chain is Large ribosomal subunit protein uL3, found in Vesicomyosocius okutanii subsp. Calyptogena okutanii (strain HA).